Reading from the N-terminus, the 434-residue chain is Trigger factor (434 aa).

The PPIase FKBP-type domain maps to 161 to 246 (EDRATLDFTG…LKKVEVRELP (86 aa)).

This sequence belongs to the FKBP-type PPIase family. Tig subfamily.

The protein resides in the cytoplasm. It catalyses the reaction [protein]-peptidylproline (omega=180) = [protein]-peptidylproline (omega=0). In terms of biological role, involved in protein export. Acts as a chaperone by maintaining the newly synthesized protein in an open conformation. Functions as a peptidyl-prolyl cis-trans isomerase. The protein is Trigger factor of Yersinia enterocolitica serotype O:8 / biotype 1B (strain NCTC 13174 / 8081).